We begin with the raw amino-acid sequence, 156 residues long: Transcriptional repressor NrdR (156 aa).

Residues 3–34 fold into a zinc finger; the sequence is CPYCRHPDSRVVDSREAEEGAAIRRRRSCPNC. An ATP-cone domain is found at 46–136; it reads LSVVKRSGVT…VYRSFTSAED (91 aa).

This sequence belongs to the NrdR family. Zn(2+) is required as a cofactor.

Its function is as follows. Negatively regulates transcription of bacterial ribonucleotide reductase nrd genes and operons by binding to NrdR-boxes. This is Transcriptional repressor NrdR from Nocardia farcinica (strain IFM 10152).